A 404-amino-acid polypeptide reads, in one-letter code: Cytochrome b (404 aa).

4 consecutive transmembrane segments (helical) span residues 35–55 (FGSLAGLCLVIQILTGVFLAM), 79–101 (WLLRYMHANGASMFFIVVYLHFF), 116–136 (VWCLGVVILLLMIVTAFIGYV), and 182–202 (FFSLHYLLPFIIAGASILHLA). 2 residues coordinate heme b: His-85 and His-99. The heme b site is built by His-186 and His-200. Residue His-205 participates in a ubiquinone binding. 4 helical membrane-spanning segments follow: residues 228–248 (IYVKDLVGWVAFAIFFSIFVF), 292–312 (LGGVAAIGLVFVSLLALPFIN), 324–344 (IHQKFFWLLVADCLLLGWIGC), and 351–370 (YVTIGQIASVGFFFYFAITP).

This sequence belongs to the cytochrome b family. In terms of assembly, the main subunits of complex b-c1 are: cytochrome b, cytochrome c1 and the Rieske protein. Heme b is required as a cofactor.

It localises to the mitochondrion inner membrane. Its function is as follows. Component of the ubiquinol-cytochrome c reductase complex (complex III or cytochrome b-c1 complex) that is part of the mitochondrial respiratory chain. The b-c1 complex mediates electron transfer from ubiquinol to cytochrome c. Contributes to the generation of a proton gradient across the mitochondrial membrane that is then used for ATP synthesis. The sequence is that of Cytochrome b (MT-CYB) from Marchantia polymorpha (Common liverwort).